An 84-amino-acid chain; its full sequence is uncharacterized protein (84 aa).

The chain crosses the membrane as a helical span at residues 13–35 (TTLVLTIISTTTTTLFAIIQLYL). Residues 41-84 (LKDAVKEIVNSELSNLKTEIEELKIKQDELSRQVEEIKRKLDQK) are a coiled coil.

Its subcellular location is the host membrane. This is an uncharacterized protein from Sulfolobus islandicus rod-shaped virus 1 (SIRV-1).